The primary structure comprises 497 residues: ATP synthase subunit alpha, chloroplastic (497 aa).

170 to 177 contacts ATP; that stretch reads GDRQTGKT.

This sequence belongs to the ATPase alpha/beta chains family. As to quaternary structure, F-type ATPases have 2 components, CF(1) - the catalytic core - and CF(0) - the membrane proton channel. CF(1) has five subunits: alpha(3), beta(3), gamma(1), delta(1), epsilon(1). CF(0) has four main subunits: a, b, b' and c.

The protein localises to the plastid. The protein resides in the chloroplast thylakoid membrane. The enzyme catalyses ATP + H2O + 4 H(+)(in) = ADP + phosphate + 5 H(+)(out). Functionally, produces ATP from ADP in the presence of a proton gradient across the membrane. The alpha chain is a regulatory subunit. This Bigelowiella natans (Pedinomonas minutissima) protein is ATP synthase subunit alpha, chloroplastic.